Reading from the N-terminus, the 231-residue chain is Sugar fermentation stimulation protein homolog (231 aa).

It belongs to the SfsA family.

In Syntrophotalea carbinolica (strain DSM 2380 / NBRC 103641 / GraBd1) (Pelobacter carbinolicus), this protein is Sugar fermentation stimulation protein homolog.